We begin with the raw amino-acid sequence, 404 residues long: Argininosuccinate synthase (404 aa).

Residues 10–18 and Ala38 each bind ATP; that span reads AYSGGVDTS. Tyr89 lines the L-citrulline pocket. Gly119 lines the ATP pocket. 3 residues coordinate L-aspartate: Thr121, Asn125, and Asp126. Asn125 serves as a coordination point for L-citrulline. The L-citrulline site is built by Arg129, Ser177, Ser186, Glu262, and Tyr274.

It belongs to the argininosuccinate synthase family. Type 1 subfamily. Homotetramer.

The protein resides in the cytoplasm. The catalysed reaction is L-citrulline + L-aspartate + ATP = 2-(N(omega)-L-arginino)succinate + AMP + diphosphate + H(+). It functions in the pathway amino-acid biosynthesis; L-arginine biosynthesis; L-arginine from L-ornithine and carbamoyl phosphate: step 2/3. This is Argininosuccinate synthase from Prochlorococcus marinus (strain AS9601).